A 388-amino-acid polypeptide reads, in one-letter code: UDP-galactose transporter senju (388 aa).

A run of 10 helical transmembrane segments spans residues 13–33 (LTFVIFLLYMSLFIGQGIFVT), 46–66 (TVTVVLLTEVFKLIVSTCLYC), 84–104 (VLGLYMVPAFLYCLYNNLAFV), 113–133 (TYYLLLQLRVVVTGILFQIIF), 142–162 (WISLILLTLGCMMKQVDFGSF), 202–222 (FSLSAVFILAQTICSCLAGVY), 236–256 (IFVQNVFMYLDSIVCNAVILL), 276–296 (FSVLIIIVNNAAIGIVTSFFL), 309–329 (ALELLFTAVLCYFLFSIPIYM), and 331–351 (TALAIAVVSYAIYLYTQSPVV).

It belongs to the nucleotide-sugar transporter family.

The protein resides in the golgi apparatus membrane. Its function is as follows. UDP-galactose transporter involved in the synthesis of galactose-containing glycans. Plays a role in quiescence of the innate immune response, possibly by regulating glycosylation of the Toll pathway ligand spz. This is UDP-galactose transporter senju from Drosophila melanogaster (Fruit fly).